The following is a 297-amino-acid chain: NAC domain-containing protein 72 (297 aa).

An NAC domain is found at 14–162 (LPPGFRFYPT…DWVLCRIYKK (149 aa)). Residues 111-168 (VGIKKALVFYAGKAPKGTKTNWIMHEYRLIEHSRSHGSSKLDDWVLCRIYKKTSGSQR) mediate DNA binding. 2 disordered regions span residues 168–195 (RQAV…SQLD) and 259–278 (GEAE…LTQS). Polar residues predominate over residues 266–277 (VNRQQNSSGLTQ).

Expressed in leaves and in root pericycle and epidermis.

It localises to the nucleus. Functionally, transcription factors that bind specifically to the 5'-CATGTG-3' motif and with bipartite regions with 5'-CGTr-3' and 5'-YACG-3' as cores. Involved in the regulation of metabolic reprogramming during senescence by promoting the chloroplast protein degradation and the catabolism of lysine, phytol and free fatty acids via the induction of CV, LKR/SDH and PES1 expression. Also triggers the degradation of starch and the accumulation of mono- and disaccharides during senescence by enhancing the expression of AMY1, SFP1 and SWEET15. In Arabidopsis thaliana (Mouse-ear cress), this protein is NAC domain-containing protein 72.